The sequence spans 688 residues: Glycine--tRNA ligase beta subunit (688 aa).

This sequence belongs to the class-II aminoacyl-tRNA synthetase family. Tetramer of two alpha and two beta subunits.

The protein resides in the cytoplasm. It carries out the reaction tRNA(Gly) + glycine + ATP = glycyl-tRNA(Gly) + AMP + diphosphate. This is Glycine--tRNA ligase beta subunit (glyS) from Haemophilus influenzae (strain ATCC 51907 / DSM 11121 / KW20 / Rd).